The following is a 235-amino-acid chain: MRPDDINPRTGLVVALVSVFLVFGFMFTVSGMKGETLGNIPLLAIGPAICLPGIAAIALARKTEGCTKWPENELLWVRKLPCFRKPKDKEVVELLRTPSDLESGKGSSDELAKKAGLRGKPSLQGQGELPMASSITTPTPMEEGECQSPGQSGRREETSRYLDGYCPSGSSLTYSALDAKCSAWDRSEHPEPEDSIFFVPQDSIIVCSYKQNSPYDRYCCYINQSQGRWDHETIV.

Transmembrane regions (helical) follow at residues 12–32 (LVVA…VSGM) and 40–60 (IPLL…IALA). The segment at 99–158 (SDLESGKGSSDELAKKAGLRGKPSLQGQGELPMASSITTPTPMEEGECQSPGQSGRREET) is disordered.

It is found in the membrane. The protein is Transmembrane protein 215 (TMEM215) of Bos taurus (Bovine).